Here is a 177-residue protein sequence, read N- to C-terminus: ATP synthase subunit delta (177 aa).

It belongs to the ATPase delta chain family. F-type ATPases have 2 components, F(1) - the catalytic core - and F(0) - the membrane proton channel. F(1) has five subunits: alpha(3), beta(3), gamma(1), delta(1), epsilon(1). F(0) has three main subunits: a(1), b(2) and c(10-14). The alpha and beta chains form an alternating ring which encloses part of the gamma chain. F(1) is attached to F(0) by a central stalk formed by the gamma and epsilon chains, while a peripheral stalk is formed by the delta and b chains.

The protein resides in the cell inner membrane. F(1)F(0) ATP synthase produces ATP from ADP in the presence of a proton or sodium gradient. F-type ATPases consist of two structural domains, F(1) containing the extramembraneous catalytic core and F(0) containing the membrane proton channel, linked together by a central stalk and a peripheral stalk. During catalysis, ATP synthesis in the catalytic domain of F(1) is coupled via a rotary mechanism of the central stalk subunits to proton translocation. Its function is as follows. This protein is part of the stalk that links CF(0) to CF(1). It either transmits conformational changes from CF(0) to CF(1) or is implicated in proton conduction. This Klebsiella pneumoniae (strain 342) protein is ATP synthase subunit delta.